The sequence spans 144 residues: Prefoldin subunit alpha (144 aa).

The protein belongs to the prefoldin alpha subunit family. Heterohexamer of two alpha and four beta subunits.

It is found in the cytoplasm. In terms of biological role, molecular chaperone capable of stabilizing a range of proteins. Seems to fulfill an ATP-independent, HSP70-like function in archaeal de novo protein folding. This is Prefoldin subunit alpha from Methanococcus maripaludis (strain C5 / ATCC BAA-1333).